The primary structure comprises 393 residues: Phosphoglycerate kinase (393 aa).

Residues 21–23 (DFN), Arg-37, 60–63 (HLGR), Arg-119, and Arg-152 each bind substrate. ATP is bound by residues Lys-202, Gly-291, Glu-322, and 348–351 (GGDT).

The protein belongs to the phosphoglycerate kinase family. Monomer.

The protein localises to the cytoplasm. It catalyses the reaction (2R)-3-phosphoglycerate + ATP = (2R)-3-phospho-glyceroyl phosphate + ADP. It participates in carbohydrate degradation; glycolysis; pyruvate from D-glyceraldehyde 3-phosphate: step 2/5. This chain is Phosphoglycerate kinase, found in Coprothermobacter proteolyticus (strain ATCC 35245 / DSM 5265 / OCM 4 / BT).